We begin with the raw amino-acid sequence, 601 residues long: Elongation factor 4 (601 aa).

The 183-residue stretch at 5-187 folds into the tr-type G domain; it reads ENIRNFCIIA…AIVHHLPAPK (183 aa). Residues 17-22 and 134-137 contribute to the GTP site; these read DHGKST and NKID.

Belongs to the TRAFAC class translation factor GTPase superfamily. Classic translation factor GTPase family. LepA subfamily.

It localises to the cell inner membrane. It carries out the reaction GTP + H2O = GDP + phosphate + H(+). Its function is as follows. Required for accurate and efficient protein synthesis under certain stress conditions. May act as a fidelity factor of the translation reaction, by catalyzing a one-codon backward translocation of tRNAs on improperly translocated ribosomes. Back-translocation proceeds from a post-translocation (POST) complex to a pre-translocation (PRE) complex, thus giving elongation factor G a second chance to translocate the tRNAs correctly. Binds to ribosomes in a GTP-dependent manner. This chain is Elongation factor 4, found in Desulfovibrio desulfuricans (strain ATCC 27774 / DSM 6949 / MB).